Consider the following 209-residue polypeptide: High frequency lysogenization protein HflD homolog (209 aa).

This sequence belongs to the HflD family.

The protein localises to the cytoplasm. The protein resides in the cell inner membrane. The polypeptide is High frequency lysogenization protein HflD homolog (Saccharophagus degradans (strain 2-40 / ATCC 43961 / DSM 17024)).